The following is a 502-amino-acid chain: Mannitol 2-dehydrogenase (502 aa).

I37 to A48 contacts NAD(+).

This sequence belongs to the mannitol dehydrogenase family. In terms of assembly, monomer.

The enzyme catalyses D-mannitol + NAD(+) = D-fructose + NADH + H(+). In terms of biological role, catalyzes the NAD(H)-dependent interconversion of D-fructose and D-mannitol in the mannitol metabolic pathway. This is Mannitol 2-dehydrogenase from Aspergillus fumigatus (strain CBS 144.89 / FGSC A1163 / CEA10) (Neosartorya fumigata).